A 408-amino-acid chain; its full sequence is MSPCENDTPINWKRNLIVAWLGCFLTGAAFSLVMPFLPLYVEQLGVTGHSALNMWSGIVFSITFLFSSIASPFWGGLADRKGRKLMLLRSALGMGIVMVLMGLAQNIWQFLILRALLGLLGGFVPNANALIATQVPRNKSGWALGTLSTGGVSGALLGPMAGGLLADSYGLRPVFFITASVLILCFFVTLFCIREKFQPVSKKEMLHMREVVTSLKNPKLVLSLFVTTLIIQVATGSIAPILTLYVRELAGNVSNVAFISGMIASVPGVAALLSAPRLGKLGDRIGPEKILITALIFSVLLLIPMSYVQTPLQLGILRFLLGAADGALLPAVQTLLVYNSSNQIAGRIFSYNQSFRDIGNVTGPLMGAAISANYGFRAVFLVTAGVVLFNAVYSWNSLRRRRIPQVSN.

11 helical membrane passes run 16-36, 58-78, 92-112, 115-135, 146-166, 173-193, 224-244, 256-276, 290-310, 319-339, and 378-398; these read LIVA…VMPF, IVFS…GGLA, LGMG…QFLI, ALLG…ATQV, TLST…GLLA, PVFF…LFCI, LFVT…ILTL, VAFI…LSAP, ILIT…YVQT, FLLG…LVYN, and AVFL…WNSL.

Belongs to the major facilitator superfamily. DHA1 family. MdtG (TC 2.A.1.2.20) subfamily.

It localises to the cell inner membrane. Its function is as follows. Confers resistance to fosfomycin and deoxycholate. The protein is Multidrug resistance protein MdtG of Escherichia coli (strain 55989 / EAEC).